The chain runs to 476 residues: Aspartyl/glutamyl-tRNA(Asn/Gln) amidotransferase subunit B (476 aa).

It belongs to the GatB/GatE family. GatB subfamily. In terms of assembly, heterotrimer of A, B and C subunits.

It catalyses the reaction L-glutamyl-tRNA(Gln) + L-glutamine + ATP + H2O = L-glutaminyl-tRNA(Gln) + L-glutamate + ADP + phosphate + H(+). The catalysed reaction is L-aspartyl-tRNA(Asn) + L-glutamine + ATP + H2O = L-asparaginyl-tRNA(Asn) + L-glutamate + ADP + phosphate + 2 H(+). Functionally, allows the formation of correctly charged Asn-tRNA(Asn) or Gln-tRNA(Gln) through the transamidation of misacylated Asp-tRNA(Asn) or Glu-tRNA(Gln) in organisms which lack either or both of asparaginyl-tRNA or glutaminyl-tRNA synthetases. The reaction takes place in the presence of glutamine and ATP through an activated phospho-Asp-tRNA(Asn) or phospho-Glu-tRNA(Gln). The polypeptide is Aspartyl/glutamyl-tRNA(Asn/Gln) amidotransferase subunit B (Listeria monocytogenes serotype 4b (strain CLIP80459)).